The chain runs to 89 residues: UPF0147 protein TV0625 (89 aa).

Belongs to the UPF0147 family.

This chain is UPF0147 protein TV0625, found in Thermoplasma volcanium (strain ATCC 51530 / DSM 4299 / JCM 9571 / NBRC 15438 / GSS1).